We begin with the raw amino-acid sequence, 224 residues long: Pleckstrin homology domain-containing family B member 2 (224 aa).

The PH domain occupies 2-109 (AFVKSGWLLR…WKIALQDART (108 aa)). Lys20 contacts a 1,2-diacyl-sn-glycero-3-phospho-L-serine.

The protein resides in the recycling endosome membrane. Its function is as follows. Involved in retrograde transport of recycling endosomes. This Gallus gallus (Chicken) protein is Pleckstrin homology domain-containing family B member 2 (PLEKHB2).